The following is an 81-amino-acid chain: Large ribosomal subunit protein bL31B (81 aa).

This sequence belongs to the bacterial ribosomal protein bL31 family. Type B subfamily. In terms of assembly, part of the 50S ribosomal subunit.

This is Large ribosomal subunit protein bL31B from Bacillus licheniformis (strain ATCC 14580 / DSM 13 / JCM 2505 / CCUG 7422 / NBRC 12200 / NCIMB 9375 / NCTC 10341 / NRRL NRS-1264 / Gibson 46).